The chain runs to 162 residues: Peroxiredoxin-2D (162 aa).

The 159-residue stretch at 4 to 162 folds into the Thioredoxin domain; the sequence is ITVGDVVPDG…SSAEDILKAL (159 aa). Catalysis depends on cysteine 51, which acts as the Cysteine sulfenic acid (-SOH) intermediate.

Belongs to the peroxiredoxin family. Prx5 subfamily. Monomer. As to expression, exclusively expressed in buds and flowers. Also detected in pollen.

The protein resides in the cytoplasm. The enzyme catalyses [glutaredoxin]-dithiol + a hydroperoxide = [glutaredoxin]-disulfide + an alcohol + H2O. Thiol-specific peroxidase that catalyzes the reduction of hydrogen peroxide and organic hydroperoxides to water and alcohols, respectively. Plays a role in cell protection against oxidative stress by detoxifying peroxides. May be involved in intracellular redox signaling. The sequence is that of Peroxiredoxin-2D (PRXIID) from Arabidopsis thaliana (Mouse-ear cress).